Consider the following 258-residue polypeptide: Proteasome subunit beta type-1 (258 aa).

The protein belongs to the peptidase T1B family. In terms of assembly, the 26S proteasome consists of a 20S proteasome core and two 19S regulatory subunits. The 20S proteasome core is composed of 28 subunits that are arranged in four stacked rings, resulting in a barrel-shaped structure. The two end rings are each formed by seven alpha subunits, and the two central rings are each formed by seven beta subunits. The catalytic chamber with the active sites is on the inside of the barrel.

The protein resides in the cytoplasm. Its subcellular location is the nucleus. Functionally, non-catalytic component of the proteasome, a multicatalytic proteinase complex which is characterized by its ability to cleave peptides with Arg, Phe, Tyr, Leu, and Glu adjacent to the leaving group at neutral or slightly basic pH. The proteasome has an ATP-dependent proteolytic activity. The polypeptide is Proteasome subunit beta type-1 (pbs-6) (Caenorhabditis elegans).